A 341-amino-acid chain; its full sequence is tRNA (cytidine(56)-2'-O)-methyltransferase (341 aa).

Residues Leu79 and 104 to 108 each bind S-adenosyl-L-methionine; that span reads GAEKV. One can recognise an HD domain in the interval 187–294; it reads IIRHVETVYK…VAHADNLVSM (108 aa).

This sequence belongs to the aTrm56 family. Homodimer.

It localises to the cytoplasm. The catalysed reaction is cytidine(56) in tRNA + S-adenosyl-L-methionine = 2'-O-methylcytidine(56) in tRNA + S-adenosyl-L-homocysteine + H(+). In terms of biological role, specifically catalyzes the AdoMet-dependent 2'-O-ribose methylation of cytidine at position 56 in tRNAs. The protein is tRNA (cytidine(56)-2'-O)-methyltransferase of Picrophilus torridus (strain ATCC 700027 / DSM 9790 / JCM 10055 / NBRC 100828 / KAW 2/3).